The following is a 198-amino-acid chain: MTPLSKIEALLFVAGEDGLSLRQLATLLDIPVTALLQQLEKMAQKYERDDNSALSLLESSKTYKLVTKKDYADLLRQYSKTPINQSLSRASLEVLSIIAYKQPITRIEVDNIRGVNSSSAISKLQAFDLIQEAGKKEVLGRPNLYVTSDYFLDYMGINSLEELPDASSIELKDEEFTLFDNKENEEQISENVKEENEN.

The protein belongs to the ScpB family. As to quaternary structure, homodimer. Homodimerization may be required to stabilize the binding of ScpA to the Smc head domains. Component of a cohesin-like complex composed of ScpA, ScpB and the Smc homodimer, in which ScpA and ScpB bind to the head domain of Smc. The presence of the three proteins is required for the association of the complex with DNA.

It localises to the cytoplasm. In terms of biological role, participates in chromosomal partition during cell division. May act via the formation of a condensin-like complex containing Smc and ScpA that pull DNA away from mid-cell into both cell halves. This chain is Segregation and condensation protein B, found in Streptococcus mutans serotype c (strain ATCC 700610 / UA159).